Here is a 322-residue protein sequence, read N- to C-terminus: Thioredoxin reductase (322 aa).

FAD-binding positions include 12 to 15, 34 to 42, N51, and V84; these read SGPA and EGAVTAGGA. C136 and C139 are disulfide-bonded. 4 residues coordinate NADP(+): H176, R182, I239, and Y259. FAD-binding positions include D279 and 286-289; that span reads RQAI. R286 serves as a coordination point for NADP(+).

The protein belongs to the class-II pyridine nucleotide-disulfide oxidoreductase family. In terms of assembly, homodimer. It depends on FAD as a cofactor.

It is found in the cytoplasm. It carries out the reaction [thioredoxin]-dithiol + NADP(+) = [thioredoxin]-disulfide + NADPH + H(+). This Streptomyces coelicolor (strain ATCC BAA-471 / A3(2) / M145) protein is Thioredoxin reductase.